Here is a 312-residue protein sequence, read N- to C-terminus: Tyrosine recombinase XerC (312 aa).

The region spanning 1 to 103 (MIASIYSFLD…SIKSFAHYCV (103 aa)) is the Core-binding (CB) domain. Positions 124–306 (ELPSPMTYAQ…SVKLKKQTHQ (183 aa)) constitute a Tyr recombinase domain. Catalysis depends on residues arginine 164, lysine 188, histidine 258, arginine 261, and histidine 284. Tyrosine 293 acts as the O-(3'-phospho-DNA)-tyrosine intermediate in catalysis.

This sequence belongs to the 'phage' integrase family. XerC subfamily. In terms of assembly, forms a cyclic heterotetrameric complex composed of two molecules of XerC and two molecules of XerD.

It localises to the cytoplasm. Site-specific tyrosine recombinase, which acts by catalyzing the cutting and rejoining of the recombining DNA molecules. The XerC-XerD complex is essential to convert dimers of the bacterial chromosome into monomers to permit their segregation at cell division. It also contributes to the segregational stability of plasmids. This is Tyrosine recombinase XerC from Chlamydia pneumoniae (Chlamydophila pneumoniae).